The following is a 452-amino-acid chain: Enolase (452 aa).

Residue glutamine 167 participates in (2R)-2-phosphoglycerate binding. The Proton donor role is filled by glutamate 209. Mg(2+) is bound by residues aspartate 250, glutamate 307, and aspartate 334. The (2R)-2-phosphoglycerate site is built by lysine 359, arginine 388, serine 389, and lysine 410. The Proton acceptor role is filled by lysine 359.

Belongs to the enolase family. Mg(2+) is required as a cofactor.

It is found in the cytoplasm. Its subcellular location is the secreted. It localises to the cell surface. The enzyme catalyses (2R)-2-phosphoglycerate = phosphoenolpyruvate + H2O. It functions in the pathway carbohydrate degradation; glycolysis; pyruvate from D-glyceraldehyde 3-phosphate: step 4/5. Catalyzes the reversible conversion of 2-phosphoglycerate (2-PG) into phosphoenolpyruvate (PEP). It is essential for the degradation of carbohydrates via glycolysis. The polypeptide is Enolase (Mesomycoplasma hyopneumoniae (strain 232) (Mycoplasma hyopneumoniae)).